The primary structure comprises 219 residues: Probable nicotinate-nucleotide adenylyltransferase (219 aa).

Belongs to the NadD family.

The catalysed reaction is nicotinate beta-D-ribonucleotide + ATP + H(+) = deamido-NAD(+) + diphosphate. It participates in cofactor biosynthesis; NAD(+) biosynthesis; deamido-NAD(+) from nicotinate D-ribonucleotide: step 1/1. Functionally, catalyzes the reversible adenylation of nicotinate mononucleotide (NaMN) to nicotinic acid adenine dinucleotide (NaAD). In Pseudomonas putida (strain W619), this protein is Probable nicotinate-nucleotide adenylyltransferase.